Reading from the N-terminus, the 203-residue chain is ADP-ribosylation factor-like protein 6-interacting protein 1 (203 aa).

Topologically, residues Met-1 to Arg-41 are cytoplasmic. Residues Ala-42–Leu-62 form a helical membrane-spanning segment. Topologically, residues Asp-63–Ser-65 are lumenal. Residues Val-66 to Ile-86 form a helical membrane-spanning segment. The Cytoplasmic segment spans residues Leu-87–Lys-133. Residues Pro-134–Asn-175 form a helical membrane-spanning segment. Over Gln-176–Glu-203 the chain is Lumenal.

It belongs to the ARL6ip family. Homooligomer. Heterodimer with ARL6IP5. Interacts with ARL6. Interacts with TMEM33. Interacts with ATL1. In terms of tissue distribution, expressed in all hematopoietic cell lineages, but the highest level of expression is found in early myeloid progenitor cells. Expressed in brain, bone marrow, thymus and lung. Expressed at low level in liver, kidney and spleen. Not detected in heart.

The protein resides in the endomembrane system. It localises to the endoplasmic reticulum membrane. The protein localises to the endoplasmic reticulum. In terms of biological role, positively regulates SLC1A1/EAAC1-mediated glutamate transport by increasing its affinity for glutamate in a PKC activity-dependent manner. Promotes the catalytic efficiency of SLC1A1/EAAC1 probably by reducing its interaction with ARL6IP5, a negative regulator of SLC1A1/EAAC1-mediated glutamate transport. Plays a role in the formation and stabilization of endoplasmic reticulum tubules. Negatively regulates apoptosis, possibly by modulating the activity of caspase-9 (CASP9). Inhibits cleavage of CASP9-dependent substrates and downstream markers of apoptosis but not CASP9 itself. May be involved in protein transport, membrane trafficking, or cell signaling during hematopoietic maturation. The chain is ADP-ribosylation factor-like protein 6-interacting protein 1 (ARL6IP1) from Homo sapiens (Human).